A 372-amino-acid chain; its full sequence is Dual-specificity RNA methyltransferase RlmN (372 aa).

E94 serves as the catalytic Proton acceptor. In terms of domain architecture, Radical SAM core spans 100-339 (DGDRATLCVS…VTIRKTRGDD (240 aa)). Residues C107 and C344 are joined by a disulfide bond. Residues C114, C118, and C121 each coordinate [4Fe-4S] cluster. S-adenosyl-L-methionine is bound by residues 168-169 (GE), S200, 222-224 (SLH), and N301. C344 serves as the catalytic S-methylcysteine intermediate.

It belongs to the radical SAM superfamily. RlmN family. It depends on [4Fe-4S] cluster as a cofactor.

The protein resides in the cytoplasm. The catalysed reaction is adenosine(2503) in 23S rRNA + 2 reduced [2Fe-2S]-[ferredoxin] + 2 S-adenosyl-L-methionine = 2-methyladenosine(2503) in 23S rRNA + 5'-deoxyadenosine + L-methionine + 2 oxidized [2Fe-2S]-[ferredoxin] + S-adenosyl-L-homocysteine. It catalyses the reaction adenosine(37) in tRNA + 2 reduced [2Fe-2S]-[ferredoxin] + 2 S-adenosyl-L-methionine = 2-methyladenosine(37) in tRNA + 5'-deoxyadenosine + L-methionine + 2 oxidized [2Fe-2S]-[ferredoxin] + S-adenosyl-L-homocysteine. In terms of biological role, specifically methylates position 2 of adenine 2503 in 23S rRNA and position 2 of adenine 37 in tRNAs. m2A2503 modification seems to play a crucial role in the proofreading step occurring at the peptidyl transferase center and thus would serve to optimize ribosomal fidelity. The sequence is that of Dual-specificity RNA methyltransferase RlmN from Aliivibrio fischeri (strain MJ11) (Vibrio fischeri).